A 164-amino-acid polypeptide reads, in one-letter code: C-phycoerythrin class 1 subunit alpha (164 aa).

2 residues coordinate (2R,3E)-phycoerythrobilin: Cys82 and Cys139.

The protein belongs to the phycobiliprotein family. Heterodimer of an alpha and a beta chain. Contains one covalently linked bilin chromophore.

Its subcellular location is the cellular thylakoid membrane. Its function is as follows. Light-harvesting photosynthetic bile pigment-protein from the phycobiliprotein complex. This chain is C-phycoerythrin class 1 subunit alpha (cpeA), found in Synechococcus sp. (strain WH7803).